The primary structure comprises 862 residues: Glucans biosynthesis glucosyltransferase H (862 aa).

A disordered region spans residues 1-25 (MELPATSGLNAQPGNAEGTTASTRP). Over residues 7 to 25 (SGLNAQPGNAEGTTASTRP) the composition is skewed to polar residues. Transmembrane regions (helical) follow at residues 188–210 (RLTL…SSVL), 545–567 (GVMA…ALLA), 597–619 (ALFS…VLWA), 626–648 (GGAV…AAPV), and 708–730 (FLWW…VFSS).

This sequence belongs to the glycosyltransferase 2 family. OpgH subfamily.

It localises to the cell inner membrane. The protein operates within glycan metabolism; osmoregulated periplasmic glucan (OPG) biosynthesis. Functionally, involved in the biosynthesis of osmoregulated periplasmic glucans (OPGs). In Ralstonia nicotianae (strain ATCC BAA-1114 / GMI1000) (Ralstonia solanacearum), this protein is Glucans biosynthesis glucosyltransferase H.